Here is a 472-residue protein sequence, read N- to C-terminus: ATP synthase subunit beta (472 aa).

An ATP-binding site is contributed by 157-164 (GGAGVGKT).

It belongs to the ATPase alpha/beta chains family. As to quaternary structure, F-type ATPases have 2 components, CF(1) - the catalytic core - and CF(0) - the membrane proton channel. CF(1) has five subunits: alpha(3), beta(3), gamma(1), delta(1), epsilon(1). CF(0) has three main subunits: a(1), b(2) and c(9-12). The alpha and beta chains form an alternating ring which encloses part of the gamma chain. CF(1) is attached to CF(0) by a central stalk formed by the gamma and epsilon chains, while a peripheral stalk is formed by the delta and b chains.

The protein localises to the cell inner membrane. It carries out the reaction ATP + H2O + 4 H(+)(in) = ADP + phosphate + 5 H(+)(out). Functionally, produces ATP from ADP in the presence of a proton gradient across the membrane. The catalytic sites are hosted primarily by the beta subunits. The polypeptide is ATP synthase subunit beta (Desulfatibacillum aliphaticivorans).